We begin with the raw amino-acid sequence, 256 residues long: Ubiquinone/menaquinone biosynthesis C-methyltransferase UbiE (256 aa).

S-adenosyl-L-methionine-binding positions include Thr-79, Asp-100, and 128–129; that span reads DA.

Belongs to the class I-like SAM-binding methyltransferase superfamily. MenG/UbiE family.

The enzyme catalyses a 2-demethylmenaquinol + S-adenosyl-L-methionine = a menaquinol + S-adenosyl-L-homocysteine + H(+). It catalyses the reaction a 2-methoxy-6-(all-trans-polyprenyl)benzene-1,4-diol + S-adenosyl-L-methionine = a 5-methoxy-2-methyl-3-(all-trans-polyprenyl)benzene-1,4-diol + S-adenosyl-L-homocysteine + H(+). It participates in quinol/quinone metabolism; menaquinone biosynthesis; menaquinol from 1,4-dihydroxy-2-naphthoate: step 2/2. The protein operates within cofactor biosynthesis; ubiquinone biosynthesis. Its function is as follows. Methyltransferase required for the conversion of demethylmenaquinol (DMKH2) to menaquinol (MKH2) and the conversion of 2-polyprenyl-6-methoxy-1,4-benzoquinol (DDMQH2) to 2-polyprenyl-3-methyl-6-methoxy-1,4-benzoquinol (DMQH2). This is Ubiquinone/menaquinone biosynthesis C-methyltransferase UbiE from Pseudomonas savastanoi pv. phaseolicola (strain 1448A / Race 6) (Pseudomonas syringae pv. phaseolicola (strain 1448A / Race 6)).